A 20-amino-acid polypeptide reads, in one-letter code: 39 kDa major outer membrane protein (20 aa).

The protein resides in the cell outer membrane. This Aggregatibacter actinomycetemcomitans (Actinobacillus actinomycetemcomitans) protein is 39 kDa major outer membrane protein.